Reading from the N-terminus, the 239-residue chain is Lactate utilization protein A (239 aa).

It belongs to the LutA/YkgE family.

Is involved in L-lactate degradation and allows cells to grow with lactate as the sole carbon source. In Shouchella clausii (strain KSM-K16) (Alkalihalobacillus clausii), this protein is Lactate utilization protein A.